A 368-amino-acid polypeptide reads, in one-letter code: Histidinol-phosphate aminotransferase 1 (368 aa).

At K224 the chain carries N6-(pyridoxal phosphate)lysine.

This sequence belongs to the class-II pyridoxal-phosphate-dependent aminotransferase family. Histidinol-phosphate aminotransferase subfamily. Homodimer. It depends on pyridoxal 5'-phosphate as a cofactor.

It carries out the reaction L-histidinol phosphate + 2-oxoglutarate = 3-(imidazol-4-yl)-2-oxopropyl phosphate + L-glutamate. Its pathway is amino-acid biosynthesis; L-histidine biosynthesis; L-histidine from 5-phospho-alpha-D-ribose 1-diphosphate: step 7/9. This is Histidinol-phosphate aminotransferase 1 (hisC1) from Rhizobium meliloti (strain 1021) (Ensifer meliloti).